Reading from the N-terminus, the 346-residue chain is Biotin synthase (346 aa).

One can recognise a Radical SAM core domain in the interval 38–256 (RQVQVSTLLS…IAVARIMMPT (219 aa)). Residues Cys-53, Cys-57, and Cys-60 each contribute to the [4Fe-4S] cluster site. 4 residues coordinate [2Fe-2S] cluster: Cys-97, Cys-128, Cys-188, and Arg-260.

It belongs to the radical SAM superfamily. Biotin synthase family. In terms of assembly, homodimer. It depends on [4Fe-4S] cluster as a cofactor. Requires [2Fe-2S] cluster as cofactor.

It carries out the reaction (4R,5S)-dethiobiotin + (sulfur carrier)-SH + 2 reduced [2Fe-2S]-[ferredoxin] + 2 S-adenosyl-L-methionine = (sulfur carrier)-H + biotin + 2 5'-deoxyadenosine + 2 L-methionine + 2 oxidized [2Fe-2S]-[ferredoxin]. It functions in the pathway cofactor biosynthesis; biotin biosynthesis; biotin from 7,8-diaminononanoate: step 2/2. Its function is as follows. Catalyzes the conversion of dethiobiotin (DTB) to biotin by the insertion of a sulfur atom into dethiobiotin via a radical-based mechanism. The protein is Biotin synthase of Escherichia fergusonii (strain ATCC 35469 / DSM 13698 / CCUG 18766 / IAM 14443 / JCM 21226 / LMG 7866 / NBRC 102419 / NCTC 12128 / CDC 0568-73).